Reading from the N-terminus, the 309-residue chain is Olfactory receptor 5B21 (309 aa).

The Extracellular segment spans residues 1–26; sequence MENSTEVTEFILLGLTDDPNLQIPLL. Asn-3 carries N-linked (GlcNAc...) asparagine glycosylation. Residues 27-47 form a helical membrane-spanning segment; that stretch reads LAFLFIYLITLLGNGGMMVII. Over 48-55 the chain is Cytoplasmic; it reads HSDSHLHT. A helical transmembrane segment spans residues 56 to 76; it reads PMYFFLSNLSLVDLGYSSAVA. At 77–95 the chain is on the extracellular side; the sequence is PKTVAALRSGDKAISYDGC. Cys-95 and Cys-177 are oxidised to a cystine. A helical membrane pass occupies residues 96 to 116; sequence AAQFFFFVGFATVECYLLASM. The Cytoplasmic segment spans residues 117–137; the sequence is AYDRHAAVCRPLHYTTTMTAG. The helical transmembrane segment at 138 to 158 threads the bilayer; that stretch reads VCALLATGSYVSGFLNASIHA. The Extracellular portion of the chain corresponds to 159–199; that stretch reads AGTFRLSFCGSNEINHFFCDIPPLLALSCSDTRISKLVVFV. The helical transmembrane segment at 200 to 220 threads the bilayer; the sequence is AGFNVFFTLLVILISYFFICI. Residues 221–235 lie on the Cytoplasmic side of the membrane; the sequence is TIQRMHSAEGQKKVF. Residues 236-256 form a helical membrane-spanning segment; sequence STCASHLTALSIFYGTIIFMY. The Extracellular segment spans residues 257 to 270; the sequence is LQPNSSQSVDTDKI. Residue Asn-260 is glycosylated (N-linked (GlcNAc...) asparagine). A helical membrane pass occupies residues 271 to 291; that stretch reads ASVFYTVVIPMLNPLIYSLRN. The Cytoplasmic portion of the chain corresponds to 292 to 309; sequence KEVKSALWKILNKLYPQY.

Belongs to the G-protein coupled receptor 1 family.

It is found in the cell membrane. In terms of biological role, odorant receptor. The polypeptide is Olfactory receptor 5B21 (Homo sapiens (Human)).